We begin with the raw amino-acid sequence, 143 residues long: Ribonuclease P protein component 2 (143 aa).

It belongs to the eukaryotic/archaeal RNase P protein component 2 family. Consists of a catalytic RNA component and at least 4-5 protein subunits.

The protein resides in the cytoplasm. It catalyses the reaction Endonucleolytic cleavage of RNA, removing 5'-extranucleotides from tRNA precursor.. In terms of biological role, part of ribonuclease P, a protein complex that generates mature tRNA molecules by cleaving their 5'-ends. This Saccharolobus solfataricus (strain ATCC 35092 / DSM 1617 / JCM 11322 / P2) (Sulfolobus solfataricus) protein is Ribonuclease P protein component 2.